A 299-amino-acid chain; its full sequence is Superkiller complex protein 8 (299 aa).

WD repeat units follow at residues 11 to 48, 54 to 93, 96 to 135, 138 to 177, 180 to 219, 223 to 263, and 266 to 299; these read AHEDGIWCVKWQGDIIATGGMGTKVKTWHGNQPQFLTE, KHILGVTSLDIDIGARYLATGGMDGTVRLFDLSTNTLHKT, SGPLGCLKIGFLNSANNLVSVSESGNISIYSVETGEKLRS, NTNKQVLTMAISPNNEQIAVAGLDGTVLCYDVESGRRVSE, AHGVPIRSLCFSSDSKTIFTGAEDSQIRLHDPNSSNPYIA, GHSS…LDSS, and AHADQTWDLAFSPDSTKLVSVSDDCSIHSYALKQ.

The protein belongs to the SKI8 family.

In Dictyostelium discoideum (Social amoeba), this protein is Superkiller complex protein 8 (skic8).